Consider the following 475-residue polypeptide: Gelsolin-like protein 1 (475 aa).

The interval 1-131 is actin binding, actin severing, Ca-sensitive; it reads MGGTSLDPAL…GYRHVDDQFK (131 aa). Positions 1–239 are necessary for barbed end capping activity; sequence MGGTSLDPAL…VRKVSKGKDD (239 aa). A Gelsolin-like 1 repeat occupies 27–105; it reads FVLEPVPEVD…IQNYESPLFL (79 aa). The interval 70–73 is actin-actin interfilament contact point; the sequence is DEIG. A required for synapse elimination during development region spans residues 106-147; the sequence is SYFPDGIRYVSGGYESGYRHVDDQFKNWKPHLFHCKGKRNVR. The tract at residues 133 to 227 is required for phosphatidylinositol 4,5-bisphosphate binding and regulation; sequence WKPHLFHCKG…STFWSYFGGV (95 aa). Gelsolin-like repeat units follow at residues 148–208, 275–341, and 375–447; these read CTEV…KVHI, RKEQ…STQF, and EIAN…PPTF. Residues 240–475 are F- and G-actin binding, Ca-independent; it reads DDNYWKRLTE…VQNMRRLLFH (236 aa). The interval 248-348 is inhibitory for phosphatidylinositol 4,5-bisphosphate binding activity; the sequence is TEQITLWKVS…TQFTQWFRDW (101 aa).

This sequence belongs to the villin/gelsolin family. As to quaternary structure, monomer. Binds to actin monomers and filaments. Cleavage by caspase ced-3 activates its actin-severing function and is required for the elimination of presynaptic components during development.

Its subcellular location is the cytoplasm. The protein localises to the cytoskeleton. Its function is as follows. Calcium-regulated, actin-modulating protein that binds to the plus (or barbed) ends of actin monomers or filaments, preventing monomer exchange (end-blocking or capping). Binds actin but does not nucleate actin polymerization, albeit slows down elongation by blocking the barbed ends. By promoting actin depolymerization, required for the elimination of presynaptic components downstream of the egl-1, ced-4 and ced-3 apoptotic pathway during larval development. This chain is Gelsolin-like protein 1, found in Caenorhabditis elegans.